Consider the following 308-residue polypeptide: Ribosomal RNA small subunit methyltransferase H (308 aa).

S-adenosyl-L-methionine is bound by residues Gly-36 to His-38, Asp-55, Phe-86, Asp-103, and Gln-110.

This sequence belongs to the methyltransferase superfamily. RsmH family.

It is found in the cytoplasm. The enzyme catalyses cytidine(1402) in 16S rRNA + S-adenosyl-L-methionine = N(4)-methylcytidine(1402) in 16S rRNA + S-adenosyl-L-homocysteine + H(+). In terms of biological role, specifically methylates the N4 position of cytidine in position 1402 (C1402) of 16S rRNA. The sequence is that of Ribosomal RNA small subunit methyltransferase H from Helicobacter pylori (strain B38).